We begin with the raw amino-acid sequence, 346 residues long: Histidinol-phosphate aminotransferase (346 aa).

Lysine 209 is modified (N6-(pyridoxal phosphate)lysine).

Belongs to the class-II pyridoxal-phosphate-dependent aminotransferase family. Histidinol-phosphate aminotransferase subfamily. Homodimer. It depends on pyridoxal 5'-phosphate as a cofactor.

It carries out the reaction L-histidinol phosphate + 2-oxoglutarate = 3-(imidazol-4-yl)-2-oxopropyl phosphate + L-glutamate. The protein operates within amino-acid biosynthesis; L-histidine biosynthesis; L-histidine from 5-phospho-alpha-D-ribose 1-diphosphate: step 7/9. This Vibrio parahaemolyticus serotype O3:K6 (strain RIMD 2210633) protein is Histidinol-phosphate aminotransferase.